The primary structure comprises 339 residues: MKFGAIYEEYLREQQDKYLTKCSHVEYKRLKKVLKKCRVGRSLQEDCPNGDQQEGNNESPDICKCNSCTLCDQMFFTELTKEASEIAGCFSSRVQRLLNLHVPSGFLRYIWRVRQCFIDDQQIMVQEGRMLLNYVTMNAIAIRKILKKYDKIHGSVSGRDFKSKMQTDHIELLQSPWLIELGAFHLNCNSSDIDETVGFLKNEFFKNFSCDLTEARPLMTMAISETMKYEYSLTCPICLDTLFNPYALSCGHLFCKGCACGAASVYIFQGVKSAPPEAKCPVCRSDGVFAHAVHMTELDLLIKTRSKDYWRQRLREERNEMVKQSKEYWDSQAMLSMGI.

The SPX domain occupies Met-1–Ser-163. The segment at Cys-235 to Arg-284 adopts an RING-type zinc-finger fold.

It belongs to the RING-type zinc finger family.

The enzyme catalyses S-ubiquitinyl-[E2 ubiquitin-conjugating enzyme]-L-cysteine + [acceptor protein]-L-lysine = [E2 ubiquitin-conjugating enzyme]-L-cysteine + N(6)-ubiquitinyl-[acceptor protein]-L-lysine.. Its pathway is protein modification; protein ubiquitination. This Oryza sativa subsp. indica (Rice) protein is Probable E3 ubiquitin-protein ligase BAH1-like 1.